The following is a 193-amino-acid chain: Immunogenic protein MPB70 (193 aa).

Residues 1-30 (MKVKNTIAATSFAAAGLAALAVAVSPPAAA) form the signal peptide. The region spanning 57 to 189 (QDPVAVAASN…ATVYMIDSVL (133 aa)) is the FAS1 domain.

Generally found as a monomer; homodimer in culture fluids.

It localises to the secreted. The polypeptide is Immunogenic protein MPB70 (mpb70) (Mycobacterium bovis (strain ATCC BAA-935 / AF2122/97)).